The following is a 30-amino-acid chain: Cycloviolacin-O7 (30 aa).

The segment at residues 1–30 is a cross-link (cyclopeptide (Ser-Asn)); it reads SIPCGESCVWIPCTITALAGCKCKSKVCYN. 3 cysteine pairs are disulfide-bonded: Cys4–Cys21, Cys8–Cys23, and Cys13–Cys28.

In terms of processing, this is a cyclic peptide.

Functionally, probably participates in a plant defense mechanism. In Viola odorata (Sweet violet), this protein is Cycloviolacin-O7.